Here is a 408-residue protein sequence, read N- to C-terminus: Tyrosine--tRNA ligase (408 aa).

An L-tyrosine-binding site is contributed by Tyr-35. The short motif at 40 to 49 is the 'HIGH' region element; that stretch reads PTADSLHVGH. L-tyrosine contacts are provided by Tyr-168 and Gln-172. Positions 228–232 match the 'KMSKS' region motif; it reads KMGKT. Lys-231 contacts ATP. An S4 RNA-binding domain is found at 342-407; that stretch reads INIIDLLLKT…GKKTYHRVKL (66 aa).

Belongs to the class-I aminoacyl-tRNA synthetase family. TyrS type 1 subfamily. In terms of assembly, homodimer.

The protein resides in the cytoplasm. The enzyme catalyses tRNA(Tyr) + L-tyrosine + ATP = L-tyrosyl-tRNA(Tyr) + AMP + diphosphate + H(+). Its function is as follows. Catalyzes the attachment of tyrosine to tRNA(Tyr) in a two-step reaction: tyrosine is first activated by ATP to form Tyr-AMP and then transferred to the acceptor end of tRNA(Tyr). The polypeptide is Tyrosine--tRNA ligase (Acetivibrio thermocellus (strain ATCC 27405 / DSM 1237 / JCM 9322 / NBRC 103400 / NCIMB 10682 / NRRL B-4536 / VPI 7372) (Clostridium thermocellum)).